We begin with the raw amino-acid sequence, 378 residues long: Ubiquitin-conjugating enzyme E2 Q2 (378 aa).

The disordered stretch occupies residues 126–152; that stretch reads DQPLPTGQNGTTEEVTSEEEEEEEMAE. Residues 140 to 152 show a composition bias toward acidic residues; sequence VTSEEEEEEEMAE. Positions 207–371 constitute a UBC core domain; that stretch reads QASDRLMKEL…VQIHEKNGWY (165 aa). The Glycyl thioester intermediate role is filled by Cys-307.

The protein belongs to the ubiquitin-conjugating enzyme family. In terms of processing, auto-ubiquitinated in vitro.

It is found in the cytoplasm. It carries out the reaction S-ubiquitinyl-[E1 ubiquitin-activating enzyme]-L-cysteine + [E2 ubiquitin-conjugating enzyme]-L-cysteine = [E1 ubiquitin-activating enzyme]-L-cysteine + S-ubiquitinyl-[E2 ubiquitin-conjugating enzyme]-L-cysteine.. Its pathway is protein modification; protein ubiquitination. In terms of biological role, accepts ubiquitin from the E1 complex and catalyzes its covalent attachment to other proteins. In vitro catalyzes 'Lys-48'-linked polyubiquitination. In Mus musculus (Mouse), this protein is Ubiquitin-conjugating enzyme E2 Q2 (Ube2q2).